A 94-amino-acid chain; its full sequence is Large ribosomal subunit protein uL23cz (94 aa).

It belongs to the universal ribosomal protein uL23 family. As to quaternary structure, part of the 50S ribosomal subunit.

It localises to the plastid. Its subcellular location is the chloroplast. In terms of biological role, binds to 23S rRNA. This chain is Large ribosomal subunit protein uL23cz (rpl23-A), found in Agrostis stolonifera (Creeping bentgrass).